Here is a 296-residue protein sequence, read N- to C-terminus: Glycine--tRNA ligase alpha subunit (296 aa).

Belongs to the class-II aminoacyl-tRNA synthetase family. Tetramer of two alpha and two beta subunits.

The protein localises to the cytoplasm. The enzyme catalyses tRNA(Gly) + glycine + ATP = glycyl-tRNA(Gly) + AMP + diphosphate. This is Glycine--tRNA ligase alpha subunit from Maricaulis maris (strain MCS10) (Caulobacter maris).